The sequence spans 376 residues: Cytochrome b (376 aa).

The next 4 helical transmembrane spans lie at 28–48, 72–94, 107–127, and 169–189; these read YGFL…FLAS, WCFR…LHIL, SWIS…IGYV, and FFVL…IHIF. Residues His-78 and His-92 each coordinate heme b. His-173 and His-187 together coordinate heme b. His-192 provides a ligand contact to a ubiquinone. Helical transmembrane passes span 214–234, 274–294, 317–337, and 340–360; these read LLSL…IQSI, IPSK…LFLL, VPII…CQLP, and IFIL…LFAL.

Belongs to the cytochrome b family. As to quaternary structure, the main subunits of complex b-c1 are: cytochrome b, cytochrome c1 and the Rieske protein. Heme b serves as cofactor.

It is found in the mitochondrion inner membrane. In terms of biological role, component of the ubiquinol-cytochrome c reductase complex (complex III or cytochrome b-c1 complex) that is part of the mitochondrial respiratory chain. The b-c1 complex mediates electron transfer from ubiquinol to cytochrome c. Contributes to the generation of a proton gradient across the mitochondrial membrane that is then used for ATP synthesis. The sequence is that of Cytochrome b (MT-CYB) from Plasmodium chabaudi.